The chain runs to 388 residues: Spermosin (388 aa).

The signal sequence occupies residues 1–22; it reads MAAINVIFISGAIALFALTGSC. The span at 29–49 shows a compositional bias: polar residues; sequence FTNKPYATQNPYSPPQTNQPT. Positions 29-98 are disordered; that stretch reads FTNKPYATQN…SENSESENSE (70 aa). The span at 54 to 64 shows a compositional bias: pro residues; the sequence is QPGPAPTPAPY. Intrachain disulfides connect cysteine 116–cysteine 251, cysteine 163–cysteine 179, cysteine 265–cysteine 330, cysteine 295–cysteine 310, and cysteine 320–cysteine 349. The Peptidase S1 domain occupies 130 to 372; it reads IVGGAEAVPN…NLEWLCCYMP (243 aa). Active-site charge relay system residues include histidine 178 and aspartate 231. Catalysis depends on serine 324, which acts as the Charge relay system.

This sequence belongs to the peptidase S1 family. Heterodimer of a heavy chain and either an L1 light chain or an L2 light chain linked by a disulfide bond. Detected in sperm, but not in unfertilized eggs (at protein level). Expressed in gonad, but not in hepatopancreas, intestine or branchial basket.

It is found in the secreted. The catalysed reaction is Hydrolyzes arginyl bonds, preferably with Pro in the P2 position.. Its activity is regulated as follows. Inhibited by peptidyl-argininals with Pro in the P2 position, diisopropyl fluorophosphate, phenylmethanesulfonyl fluoride, leupeptin, antipain, soybean trypsin inhibitor, aprotinin, ovomucoid, valyl-prolyl-arginyl-chloromethane, glycyl-valyl-arginyl-chloromethane, p-aminobenzamidine, benzamidine, zinc chloride and mercuric chloride. Its function is as follows. Trypsin-like protease with a narrow substrate specificity. Preferentially hydrolyzes substrates with Pro in the P2 position and Val in the P3 position. Plays a role in fertilization. This chain is Spermosin, found in Halocynthia roretzi (Sea squirt).